A 151-amino-acid chain; its full sequence is Ribosome maturation factor RimP (151 aa).

This sequence belongs to the RimP family.

It localises to the cytoplasm. Required for maturation of 30S ribosomal subunits. The chain is Ribosome maturation factor RimP from Vibrio atlanticus (strain LGP32) (Vibrio splendidus (strain Mel32)).